The following is a 438-amino-acid chain: Glutamyl-tRNA reductase (438 aa).

Residues 49 to 52 (TCNR), S109, 114 to 116 (EQQ), and Q120 each bind substrate. The active-site Nucleophile is the C50. NADP(+) is bound at residue 191–196 (GAGAMA).

This sequence belongs to the glutamyl-tRNA reductase family. As to quaternary structure, homodimer.

It carries out the reaction (S)-4-amino-5-oxopentanoate + tRNA(Glu) + NADP(+) = L-glutamyl-tRNA(Glu) + NADPH + H(+). The protein operates within porphyrin-containing compound metabolism; protoporphyrin-IX biosynthesis; 5-aminolevulinate from L-glutamyl-tRNA(Glu): step 1/2. Its function is as follows. Catalyzes the NADPH-dependent reduction of glutamyl-tRNA(Glu) to glutamate 1-semialdehyde (GSA). This Corynebacterium diphtheriae (strain ATCC 700971 / NCTC 13129 / Biotype gravis) protein is Glutamyl-tRNA reductase.